Reading from the N-terminus, the 396-residue chain is Odorant receptor 49a (396 aa).

Residues 1–6 are Cytoplasmic-facing; the sequence is MEKLRS. Residues 7-27 form a helical membrane-spanning segment; the sequence is YEDFIFMANMMFKTLGYDLFH. The Extracellular segment spans residues 28–34; it reads TPKPWWR. The chain crosses the membrane as a helical span at residues 35 to 55; it reads YLLVRGYFVLCTISNFYEASM. Over 56-70 the chain is Cytoplasmic; that stretch reads VTTRIIEWESLAGSP. The chain crosses the membrane as a helical span at residues 71 to 91; it reads SKIMRQGLHFFYMLSSQLKFI. Topologically, residues 92 to 141 are extracellular; sequence TFMINRKRLLQLSHRLKELYPHKEQNQRKYEVNKYYLSCSTRNVLYVYYF. A helical transmembrane segment spans residues 142–162; it reads VMVVMALEPLVQSCIMYLIGF. Residues 163–209 lie on the Cytoplasmic side of the membrane; sequence GKADFTYKRIFPTRLTFDSEKPLGYVLAYVIDFTYSQFIVNVSLGTD. The helical transmembrane segment at 210-230 threads the bilayer; sequence LWMMCVSSQISMHLGYLANML. The Extracellular segment spans residues 231-266; it reads ASIRPSPETEQQDCDFLASIIKRHQLMIRLQKDVNY. A helical transmembrane segment spans residues 267–287; the sequence is VFGLLLASNLFTTSCLLCCMA. Residues 288-296 lie on the Cytoplasmic side of the membrane; the sequence is YYTVVEGFN. A helical transmembrane segment spans residues 297 to 317; that stretch reads WEGISYMMLFASVAAQFYVVS. The Extracellular segment spans residues 318 to 396; it reads SHGQMLIDLS…FAVIRQTVEK (79 aa).

The protein belongs to the insect chemoreceptor superfamily. Heteromeric odorant receptor channel (TC 1.A.69) family. Or49a subfamily. As to quaternary structure, interacts with Orco. Complexes exist early in the endomembrane system in olfactory sensory neurons (OSNs), coupling these complexes to the conserved ciliary trafficking pathway.

The protein localises to the cell membrane. Functionally, odorant receptor which mediates acceptance or avoidance behavior, depending on its substrates. The odorant receptor repertoire encodes a large collection of odor stimuli that vary widely in identity, intensity, and duration. May form a complex with Orco to form odorant-sensing units, providing sensitive and prolonged odorant signaling and calcium permeability. Involved in the behavioral responses to butanol and 2-heptanone. This is Odorant receptor 49a (Or49a) from Drosophila melanogaster (Fruit fly).